Reading from the N-terminus, the 61-residue chain is Small ribosomal subunit protein eS30A (61 aa).

The disordered stretch occupies residues 1–36 (MGKVHGSLARAGKVKSQTPKVEKQEKPKQPKGRAYK).

It belongs to the eukaryotic ribosomal protein eS30 family. Component of the small ribosomal subunit (SSU). Mature yeast ribosomes consist of a small (40S) and a large (60S) subunit. The 40S small subunit contains 1 molecule of ribosomal RNA (18S rRNA) and at least 33 different proteins. The large 60S subunit contains 3 rRNA molecules (25S, 5.8S and 5S rRNA) and at least 46 different proteins.

The protein localises to the cytoplasm. The protein resides in the nucleus. Component of the ribosome, a large ribonucleoprotein complex responsible for the synthesis of proteins in the cell. The small ribosomal subunit (SSU) binds messenger RNAs (mRNAs) and translates the encoded message by selecting cognate aminoacyl-transfer RNA (tRNA) molecules. The large subunit (LSU) contains the ribosomal catalytic site termed the peptidyl transferase center (PTC), which catalyzes the formation of peptide bonds, thereby polymerizing the amino acids delivered by tRNAs into a polypeptide chain. The nascent polypeptides leave the ribosome through a tunnel in the LSU and interact with protein factors that function in enzymatic processing, targeting, and the membrane insertion of nascent chains at the exit of the ribosomal tunnel. This is Small ribosomal subunit protein eS30A (rps3001) from Schizosaccharomyces pombe (strain 972 / ATCC 24843) (Fission yeast).